Here is a 684-residue protein sequence, read N- to C-terminus: Threonine--tRNA ligase (684 aa).

Residues 1-66 form the TGS domain; the sequence is MSTAASPAPA…DADVEVVPVP (66 aa). The tract at residues 261-567 is catalytic; it reads DHRKLGVELD…LTEHYAGAFP (307 aa). Zn(2+) contacts are provided by Cys-366, His-417, and His-544.

Belongs to the class-II aminoacyl-tRNA synthetase family. As to quaternary structure, homodimer. Zn(2+) is required as a cofactor.

The protein localises to the cytoplasm. It catalyses the reaction tRNA(Thr) + L-threonine + ATP = L-threonyl-tRNA(Thr) + AMP + diphosphate + H(+). In terms of biological role, catalyzes the attachment of threonine to tRNA(Thr) in a two-step reaction: L-threonine is first activated by ATP to form Thr-AMP and then transferred to the acceptor end of tRNA(Thr). Also edits incorrectly charged L-seryl-tRNA(Thr). This is Threonine--tRNA ligase from Mycobacterium sp. (strain KMS).